Here is a 231-residue protein sequence, read N- to C-terminus: Cilia- and flagella-associated protein 299 (231 aa).

The protein resides in the cytoplasm. It is found in the nucleus. Functionally, may be involved in spermatogenesis. The protein is Cilia- and flagella-associated protein 299 of Bos taurus (Bovine).